Consider the following 216-residue polypeptide: Uridine kinase (216 aa).

16 to 23 (GASASGKS) provides a ligand contact to ATP.

This sequence belongs to the uridine kinase family.

It localises to the cytoplasm. The catalysed reaction is uridine + ATP = UMP + ADP + H(+). The enzyme catalyses cytidine + ATP = CMP + ADP + H(+). It participates in pyrimidine metabolism; CTP biosynthesis via salvage pathway; CTP from cytidine: step 1/3. The protein operates within pyrimidine metabolism; UMP biosynthesis via salvage pathway; UMP from uridine: step 1/1. This Pasteurella multocida (strain Pm70) protein is Uridine kinase.